We begin with the raw amino-acid sequence, 444 residues long: Methylenetetrahydrofolate--tRNA-(uracil-5-)-methyltransferase TrmFO (444 aa).

10–15 (GAGLAG) is an FAD binding site.

It belongs to the MnmG family. TrmFO subfamily. FAD serves as cofactor.

Its subcellular location is the cytoplasm. The enzyme catalyses uridine(54) in tRNA + (6R)-5,10-methylene-5,6,7,8-tetrahydrofolate + NADH + H(+) = 5-methyluridine(54) in tRNA + (6S)-5,6,7,8-tetrahydrofolate + NAD(+). It carries out the reaction uridine(54) in tRNA + (6R)-5,10-methylene-5,6,7,8-tetrahydrofolate + NADPH + H(+) = 5-methyluridine(54) in tRNA + (6S)-5,6,7,8-tetrahydrofolate + NADP(+). Functionally, catalyzes the folate-dependent formation of 5-methyl-uridine at position 54 (M-5-U54) in all tRNAs. The chain is Methylenetetrahydrofolate--tRNA-(uracil-5-)-methyltransferase TrmFO from Streptococcus pneumoniae serotype 4 (strain ATCC BAA-334 / TIGR4).